We begin with the raw amino-acid sequence, 373 residues long: D-amino-acid transaminase, chloroplastic (373 aa).

The N-terminal 57 residues, 1–57 (MAGLSLEFTVNTWNLRSLSQVPCPLRHGFRFPRRLTRRRTILMCSDSSSQSWNVPVL), are a transit peptide targeting the chloroplast. Position 128 (arginine 128) interacts with pyridoxal 5'-phosphate. The active-site Proton acceptor is the lysine 222. At lysine 222 the chain carries N6-(pyridoxal phosphate)lysine. Glutamate 255 provides a ligand contact to pyridoxal 5'-phosphate.

This sequence belongs to the class-IV pyridoxal-phosphate-dependent aminotransferase family. In terms of assembly, homodimer. Pyridoxal 5'-phosphate is required as a cofactor.

It localises to the plastid. The protein localises to the chloroplast. The catalysed reaction is D-alanine + 2-oxoglutarate = D-glutamate + pyruvate. The enzyme catalyses 4-amino-4-deoxychorismate = 4-aminobenzoate + pyruvate + H(+). It functions in the pathway cofactor biosynthesis; tetrahydrofolate biosynthesis; 4-aminobenzoate from chorismate: step 2/2. Its activity is regulated as follows. Inhibited by hydroxylamine or amino-oxyacetic acid. In terms of biological role, amino acid aminotransferase showing activity for D-Asp and D-Ala as amino donors with 2-oxoglutarate as an amino acceptor. Can also use D-Met, D-Tyr, D-Phe, D-Gln, D-Trp and D-Asn as substrates, but no activity with L-Asp, L-Ala, L-Leu, L-Ile or L-Val. Also catalyzes the reverse reaction where an amino group is transferred from D-Glu to pyruvate or oxaloacetate to produce D-Ala or D-Asp, respectively. Also involved in folate biosynthesis, acting as an aminodeoxychorismate lyase converting 4-amino-4-deoxychorismate (ADC) to p-aminobenzoate (PABA). This Arabidopsis thaliana (Mouse-ear cress) protein is D-amino-acid transaminase, chloroplastic.